Reading from the N-terminus, the 395-residue chain is G-protein coupled receptor 182 (395 aa).

Residues M1 to F53 are Extracellular-facing. N-linked (GlcNAc...) asparagine glycosylation is found at N24 and N33. Residues V54–C75 traverse the membrane as a helical segment. At R76 to L86 the chain is on the cytoplasmic side. A helical membrane pass occupies residues Y87–V109. Over M110–R123 the chain is Extracellular. C122 and C198 are oxidised to a cystine. The chain crosses the membrane as a helical span at residues F124–I145. At D146–R166 the chain is on the cytoplasmic side. The chain crosses the membrane as a helical span at residues R167 to Q189. The Extracellular portion of the chain corresponds to L190–A213. Residues V214–I235 traverse the membrane as a helical segment. The Cytoplasmic portion of the chain corresponds to L236–L254. The chain crosses the membrane as a helical span at residues L255–L276. The Extracellular portion of the chain corresponds to L277–Y295. A helical membrane pass occupies residues F296–Y316. The Cytoplasmic segment spans residues N317–P395. S329 bears the Phosphoserine mark.

This sequence belongs to the G-protein coupled receptor 1 family. As to expression, expressed in a wide variety of peripheral tissues in the adult rat with prominent expression in lung, testis, adrenal and liver.

The protein localises to the cell membrane. Functionally, orphan receptor. The sequence is that of G-protein coupled receptor 182 (Gpr182) from Rattus norvegicus (Rat).